A 225-amino-acid polypeptide reads, in one-letter code: PKHD-type hydroxylase YbiX (225 aa).

A Fe2OG dioxygenase domain is found at 78–177 (TLSTPLFNRY…RVASFMWIQS (100 aa)). Residues His96, Asp98, and His158 each coordinate Fe cation. Residue Arg168 participates in 2-oxoglutarate binding.

Fe(2+) serves as cofactor. The cofactor is L-ascorbate.

The protein is PKHD-type hydroxylase YbiX of Shigella dysenteriae serotype 1 (strain Sd197).